The sequence spans 218 residues: Cytochrome b6 (218 aa).

The chain crosses the membrane as a helical span at residues 35–55 (IFYCLGGITLVCFLIQFATGF). C38 is a heme c binding site. Positions 89 and 103 each coordinate heme b. The next 3 helical transmembrane spans lie at 93-113 (ASMM…TGGF), 119-139 (LTWV…VTGY), and 189-209 (LHTF…FLMI). Residues H190 and H205 each coordinate heme b.

The protein belongs to the cytochrome b family. PetB subfamily. In terms of assembly, the 4 large subunits of the cytochrome b6-f complex are cytochrome b6, subunit IV (17 kDa polypeptide, PetD), cytochrome f and the Rieske protein, while the 4 small subunits are PetG, PetL, PetM and PetN. The complex functions as a dimer. The cofactor is heme b. It depends on heme c as a cofactor.

The protein resides in the cellular thylakoid membrane. Functionally, component of the cytochrome b6-f complex, which mediates electron transfer between photosystem II (PSII) and photosystem I (PSI), cyclic electron flow around PSI, and state transitions. The sequence is that of Cytochrome b6 from Synechococcus sp. (strain WH7803).